We begin with the raw amino-acid sequence, 101 residues long: Anti-sigma factor RshA (101 aa).

An inhibits SigH sigma factor activity region spans residues 9-15 (DAHADHD). Iron-sulfur cluster is bound at residue cysteine 23. Inhibits SigH sigma factor activity regions lie at residues 28 to 34 (AEVWTLL) and 38 to 44 (CTPETRE). 3 residues coordinate iron-sulfur cluster: histidine 49, cysteine 53, and cysteine 56. A Phosphothreonine modification is found at threonine 94.

It belongs to the zinc-associated anti-sigma factor (ZAS) superfamily. As to quaternary structure, interacts with cognate sigma factor SigH under reducing conditions. Binding inhibits the interaction of SigH with the RNA polymerase catalytic core. It depends on iron-sulfur cluster as a cofactor. Phosphorylated, probably by PknB. Phosphorylation decreases interaction with SigH, leading to increased SigH-mediated transcription.

In terms of biological role, an redox-regulated anti-sigma factor for extracytoplasmic function (ECF) sigma factor SigH. ECF sigma factors are held in an inactive form by a cognate anti-sigma factor. RshA and some peptides derived from it inhibit the sigma factor activity of SigH. Probably releases SigH during oxidative stress. The polypeptide is Anti-sigma factor RshA (rshA) (Mycobacterium tuberculosis (strain CDC 1551 / Oshkosh)).